A 255-amino-acid chain; its full sequence is tRNA pseudouridine synthase A (255 aa).

The active-site Nucleophile is Asp52. Tyr111 lines the substrate pocket.

It belongs to the tRNA pseudouridine synthase TruA family. In terms of assembly, homodimer.

It catalyses the reaction uridine(38/39/40) in tRNA = pseudouridine(38/39/40) in tRNA. Functionally, formation of pseudouridine at positions 38, 39 and 40 in the anticodon stem and loop of transfer RNAs. The sequence is that of tRNA pseudouridine synthase A from Nitrobacter winogradskyi (strain ATCC 25391 / DSM 10237 / CIP 104748 / NCIMB 11846 / Nb-255).